A 222-amino-acid chain; its full sequence is Flagellin B5 (222 aa).

The propeptide occupies 1–4 (MRRG).

Belongs to the archaeal flagellin family.

The protein resides in the archaeal flagellum. In terms of biological role, flagellin is the subunit protein which polymerizes to form the filaments of archaeal flagella. The polypeptide is Flagellin B5 (flaB5) (Pyrococcus abyssi (strain GE5 / Orsay)).